The sequence spans 1174 residues: ATP-dependent DNA helicase SRS2 (1174 aa).

The 303-residue stretch at 14–316 (QLNTQQRAAA…IILVENYRSS (303 aa)) folds into the UvrD-like helicase ATP-binding domain. Position 38–43 (38–43 (GTGKTK)) interacts with ATP. The interval 222 to 243 (LLMYTFRLLTRVRVLSNIKHVL) is leucine-zipper. Arginine 314 lines the ATP pocket. The region spanning 317 to 654 (QKILNTSEIL…TISTIHGAKG (338 aa)) is the UvrD-like helicase C-terminal domain. A disordered region spans residues 676–704 (DDKKDESEEDEEEDQENSKKDASPKKTRV). A Phosphoserine modification is found at serine 833. Disordered regions lie at residues 865-896 (SKIN…SPTK), 909-973 (NVPS…DKVT), and 994-1024 (ELHP…SNSD). Polar residues-rich tracts occupy residues 909–922 (NVPS…STGK) and 935–955 (TDIS…NKTS). Over residues 956–973 (HMSDDLMRPSPTRKDKVT) the composition is skewed to basic and acidic residues. The span at 1007 to 1023 (SLTSSEFSGFSSACSNS) shows a compositional bias: low complexity.

The protein belongs to the helicase family. UvrD subfamily.

It is found in the nucleus. The enzyme catalyses Couples ATP hydrolysis with the unwinding of duplex DNA by translocating in the 3'-5' direction.. It catalyses the reaction ATP + H2O = ADP + phosphate + H(+). ATP-dependent DNA helicase involved in DNA repair at least for UV-induced lesions. The polarity of the helicase activity was determined to be 3' to 5'. This Saccharomyces cerevisiae (strain ATCC 204508 / S288c) (Baker's yeast) protein is ATP-dependent DNA helicase SRS2 (SRS2).